Consider the following 225-residue polypeptide: Probable polyketide biosynthesis zinc-dependent hydrolase BaeB (225 aa).

The Zn(2+) site is built by H62, H64, D66, H67, H123, D140, and H181.

Belongs to the metallo-beta-lactamase superfamily. It depends on Zn(2+) as a cofactor.

The protein resides in the cytoplasm. It participates in antibiotic biosynthesis; bacillaene biosynthesis. Probably involved in some intermediate steps for the synthesis of the antibiotic polyketide bacillaene which is involved in secondary metabolism. The chain is Probable polyketide biosynthesis zinc-dependent hydrolase BaeB (baeB) from Bacillus velezensis (strain DSM 23117 / BGSC 10A6 / LMG 26770 / FZB42) (Bacillus amyloliquefaciens subsp. plantarum).